The sequence spans 1161 residues: Nuclear receptor-interacting protein 1 (1161 aa).

The interaction with ZNF366 stretch occupies residues 1 to 416 (MTHGEELGSD…FESSTPTTID (416 aa)). An LXXLL motif 1 motif is present at residues 21-25 (LEGLL). The tract at residues 34–68 (GTAINKKSAGHKEEDQNFNLSGSAFPSCQSNGPTV) is disordered. Over residues 50–68 (NFNLSGSAFPSCQSNGPTV) the composition is skewed to polar residues. The repression domain 1 stretch occupies residues 78–335 (MLHLKKARLL…LNGQARALPA (258 aa)). Ser-104 is subject to Phosphoserine. At Lys-111 the chain carries N6-acetyllysine; alternate. Lys-111 participates in a covalent cross-link: Glycyl lysine isopeptide (Lys-Gly) (interchain with G-Cter in SUMO2); alternate. The LXXLL motif 2 signature appears at 133-137 (LASLL). Lys-158 is modified (N6-acetyllysine). Lys-170 participates in a covalent cross-link: Glycyl lysine isopeptide (Lys-Gly) (interchain with G-Cter in SUMO2). The LXXLL motif 3 signature appears at 185 to 189 (LKTLL). Glycyl lysine isopeptide (Lys-Gly) (interchain with G-Cter in SUMO2) cross-links involve residues Lys-195 and Lys-198. Phosphothreonine is present on Thr-207. Residue Ser-218 is modified to Phosphoserine. Residues 267–271 (LALLL) carry the LXXLL motif 4 motif. 2 positions are modified to N6-acetyllysine: Lys-287 and Lys-311. Ser-358 carries the post-translational modification Phosphoserine. A Glycyl lysine isopeptide (Lys-Gly) (interchain with G-Cter in SUMO2) cross-link involves residue Lys-374. A Phosphoserine modification is found at Ser-380. The short motif at 382-386 (LLHLL) is the LXXLL motif 5 element. A disordered region spans residues 393–436 (TPMNGHSQNERASSFESSTPTTIDEYSDNNPSFTDDSSGDESSY). Residues 411 to 701 (TPTTIDEYSD…PAGPEPGLPG (291 aa)) are repression domain 2. Positions 432–473 (DESSYSNCVPIDLSCKHRIEKPEAERPVSLENLTQSLLNTWD) are required for targeting to small nuclear foci. Positions 441 to 447 (PIDLSCK) match the CTBP-binding; principal site motif. 2 positions are modified to N6-acetyllysine: Lys-447 and Lys-482. A Phosphoserine modification is found at Ser-488. Positions 501 to 505 (LLQLL) match the LXXLL motif 6 motif. Lys-509 is covalently cross-linked (Glycyl lysine isopeptide (Lys-Gly) (interchain with G-Cter in SUMO2)). The span at 517–552 (NASPQDIHSDGTKFSPQNYTRTSVIESPSTNRTTPV) shows a compositional bias: polar residues. The segment at 517-559 (NASPQDIHSDGTKFSPQNYTRTSVIESPSTNRTTPVSTPPLYT) is disordered. Ser-519 carries the post-translational modification Phosphoserine. The residue at position 529 (Lys-529) is an N6-acetyllysine. Phosphoserine is present on residues Ser-531, Ser-543, and Ser-565. A CTBP-binding motif is present at residues 566 to 570 (PINLS). Disordered stretches follow at residues 604–623 (TKGK…AQNS), 639–702 (GLQS…LPGC), and 717–747 (LLGN…ERAA). Lys-607 carries the post-translational modification N6-acetyllysine. At Ser-672 the chain carries Phosphoserine. The short motif at 714 to 718 (LQLLL) is the LXXLL motif 7 element. A compositionally biased stretch (basic and acidic residues) spans 724 to 747 (GKNEKKEKTPARDEAPQEHSERAA). A repression domain 3 region spans residues 736 to 886 (DEAPQEHSER…TAVDTANHHS (151 aa)). Residues 754 to 1161 (VKIKSEPCDD…NALTIKKESE (408 aa)) form an interaction with ZNF366 region. Residues Lys-757 and Lys-803 each participate in a glycyl lysine isopeptide (Lys-Gly) (interchain with G-Cter in SUMO2) cross-link. Ser-808 carries the post-translational modification Phosphoserine. The short motif at 820–824 (LSRLL) is the LXXLL motif 8 element. The segment at 829–848 (ESYPADEQDKSHRNSELPTL) is disordered. Glycyl lysine isopeptide (Lys-Gly) (interchain with G-Cter in SUMO2) cross-links involve residues Lys-851 and Lys-902. An N6-acetyllysine; alternate modification is found at Lys-932. Lys-932 participates in a covalent cross-link: Glycyl lysine isopeptide (Lys-Gly) (interchain with G-Cter in SUMO2); alternate. The short motif at 937 to 941 (LKQLL) is the LXXLL motif 9 element. Positions 947-951 (VRDLS) match the CTBP-binding motif. Residues 950–962 (LSPHRSDSVPDTK) are compositionally biased toward basic and acidic residues. The interval 950–976 (LSPHRSDSVPDTKKKGHKNNAPGSKPE) is disordered. At Ser-1003 the chain carries Phosphoserine. The ligand-dependent nuclear receptor binding stretch occupies residues 1063–1076 (LTKTNPILYYMLQK). Residues Lys-1108, Lys-1118, and Lys-1157 each participate in a glycyl lysine isopeptide (Lys-Gly) (interchain with G-Cter in SUMO2) cross-link. A repression domain 4 region spans residues 1121-1161 (FFNLRSPYNSHMGNNASRPHSTNGEVYGLLGNALTIKKESE).

In terms of assembly, interacts with CTBP1, CTBP2, ERS1, HDAC1, HDAC2, HDAC5, HDAC6, NR2C2, NR3C1, NR3C2, YWHAH, JUN and FOS. Found in a complex with both NR3C1 and YWHAH. Interacts with NR2C1 (sumoylated form and via the ligand-binding domain); the interaction results in promoting the repressor activity of NR2C1. Interacts with RARA and RXRB homodimers and RARA/RXRB heterodimers in the presence of ligand. Interacts with HDAC1 and HDAC3 via its N-terminal domain. Interacts with ZNF366. Interacts with RORA. In terms of processing, acetylation abolishes interaction with CTBP1. Phosphorylation enhances interaction with YWHAH. Acetylation regulates its nuclear translocation and corepressive activity. As to expression, expressed in the embryonic placenta. In the adult, expression is strong in the testis and brain. Also expressed at a high level in the white adipose tissue. Expressed constantly but at a weaker level in the adult heart, lung, stomach and kidney. Expressed moderately in the skeletal muscle. Expressed at a low level in the adult spleen, liver and brown adipose tissue. Expressed in the ovary at a high level in granulosa cells and at a lower level in the thecal and interstitial compartments.

The protein resides in the nucleus. Functionally, modulates transcriptional repression by nuclear hormone receptors such as NR2C1, thyroid hormone receptor and retinoic acid receptor/RARA. Essential for cumulus expansion and follicle rupture during ovulation. Also controls the balance between fat accumulation and energy expenditure. Positive regulator of the circadian clock gene expression: stimulates transcription of BMAL1, CLOCK and CRY1 by acting as a coactivator for RORA and RORC. Involved in the regulation of ovarian function. Plays a role in renal development. The sequence is that of Nuclear receptor-interacting protein 1 from Mus musculus (Mouse).